Here is a 422-residue protein sequence, read N- to C-terminus: MVSESHHEALAAPPVTTVATVLPHNATEPASPGEGKEDAFSKLKEKFMNELHKIPLPPWALIAIAIVAVLLVLTCCFCICKKCLFKKKNKKKGKEKGGKNAINMKDVKDLGKTMKDQALKDDDAETGLTDGEEKEEPKEEEKLGKLQYSLDYDFQNNQLLVGIIQAAELPALDMGGTSDPYVKVFLLPDKKKKFETKVHRKTLNPVFNEQFTFKVPYSELGGKTLVMAVYDFDRFSKHDIIGEFKVPMNTVDFGHVTEEWRDLQSAEKEEQEKLGDICFSLRYVPTAGKLTVVILEAKNLKKMDVGGLSDPYVKIHLMQNGKRLKKKKTTIKKNTLNPYYNESFSFEVPFEQIQKVQVVVTVLDYDKIGKNDAIGKVFVGYNSTGAELRHWSDMLANPRRPIAQWHTLQVEEEVDAMLAVKK.

Topologically, residues 1–57 are vesicular; it reads MVSESHHEALAAPPVTTVATVLPHNATEPASPGEGKEDAFSKLKEKFMNELHKIPLP. The N-linked (GlcNAc...) asparagine glycan is linked to asparagine 25. A helical membrane pass occupies residues 58 to 80; the sequence is PWALIAIAIVAVLLVLTCCFCIC. Residues cysteine 75, cysteine 76, cysteine 78, cysteine 80, and cysteine 83 are each lipidated (S-palmitoyl cysteine). Topologically, residues 81 to 422 are cytoplasmic; that stretch reads KKCLFKKKNK…EVDAMLAVKK (342 aa). The disordered stretch occupies residues 113–142; sequence TMKDQALKDDDAETGLTDGEEKEEPKEEEK. The segment covering 122–134 has biased composition (acidic residues); it reads DDAETGLTDGEEK. Threonine 129 carries the phosphothreonine modification. The interval 136-382 is phospholipid binding; that stretch reads EPKEEEKLGK…AIGKVFVGYN (247 aa). Residues 142–261 form the C2 1 domain; it reads KLGKLQYSLD…DFGHVTEEWR (120 aa). Ca(2+) is bound by residues leucine 172, aspartate 173, and aspartate 179. Tyrosine 230 bears the Phosphotyrosine mark. Ca(2+) is bound by residues aspartate 231, phenylalanine 232, aspartate 233, serine 236, lysine 237, and aspartate 239. Serine 265 carries the phosphoserine modification. The 134-residue stretch at 273–406 folds into the C2 2 domain; the sequence is KLGDICFSLR…NPRRPIAQWH (134 aa). Ca(2+) is bound by residues aspartate 304 and aspartate 310. Phosphoserine occurs at positions 343 and 345. 3 residues coordinate Ca(2+): aspartate 364, aspartate 366, and aspartate 372.

The protein belongs to the synaptotagmin family. As to quaternary structure, homotetramer. Heterodimer; heterodimerizes with SYT2 in presence of calcium. Interacts with SCAMP5. Interacts with STON2. Forms a complex with SV2B, syntaxin 1 and SNAP25. Interacts with SV2A, SV2B and SV2C. Interacts with RIMS1. Interacts with PRRT2. Interacts with DNAJC5 in a phosphorylation-dependent manner. Interacts (via N-terminus) with RAB3A. Interacts with SYT12. Interacts with calmodulin. Interacts with DNM1 (via C-terminal proline-rich domain (PRD)); this interaction facilitates vesicle fission during clathrin-mediated endocytosis (CME). Ca(2+) serves as cofactor. Glycosylated.

It is found in the cytoplasmic vesicle. The protein localises to the secretory vesicle membrane. Its subcellular location is the secretory vesicle. The protein resides in the synaptic vesicle membrane. It localises to the chromaffin granule membrane. It is found in the cytoplasm. Calcium sensor that participates in triggering neurotransmitter release at the synapse. May have a regulatory role in the membrane interactions during trafficking of synaptic vesicles at the active zone of the synapse. It binds acidic phospholipids with a specificity that requires the presence of both an acidic head group and a diacyl backbone. A Ca(2+)-dependent interaction between synaptotagmin and putative receptors for activated protein kinase C has also been reported. It can bind to at least three additional proteins in a Ca(2+)-independent manner; these are neurexins, syntaxin and AP2. Plays a role in dendrite formation by melanocytes. This is Synaptotagmin-1 from Bos taurus (Bovine).